A 569-amino-acid polypeptide reads, in one-letter code: uncharacterized protein (569 aa).

The signal sequence occupies residues 1–24 (MKFQRKYWGLLSTLGVSSAVALSA). The N-palmitoyl cysteine moiety is linked to residue C25. C25 is lipidated: S-diacylglycerol cysteine. Disordered regions lie at residues 111 to 137 (SNMK…EWEV) and 242 to 267 (GKNG…KKIE). 2 stretches are compositionally biased toward low complexity: residues 119–130 (SSSSSSTGNNGS) and 249–260 (KKMTTDSSSTQQ).

To M.pneumoniae MPN_456 and M.genitalium MG321 N-terminal region.

The protein localises to the cell membrane. This is an uncharacterized protein from Mycoplasma pneumoniae (strain ATCC 29342 / M129 / Subtype 1) (Mycoplasmoides pneumoniae).